Here is a 241-residue protein sequence, read N- to C-terminus: Cobalt transport protein CbiM (241 aa).

The first 24 residues, 1–24, serve as a signal peptide directing secretion; sequence MKKIKIISFSVAYLILLTPIYASA. 6 consecutive transmembrane segments (helical) span residues 30–50, 67–87, 99–119, 131–151, 160–180, and 202–222; these read GFLP…FIVG, LLLG…LPSV, LGTI…VLIF, TLGA…YFIF, SLAV…VTSL, and GIFA…TLIV.

The protein belongs to the CbiM family. As to quaternary structure, forms an energy-coupling factor (ECF) transporter complex composed of an ATP-binding protein (A component, CbiO), a transmembrane protein (T component, CbiQ) and 2 possible substrate-capture proteins (S components, CbiM and CbiN) of unknown stoichimetry.

The protein localises to the cell membrane. The protein operates within cofactor biosynthesis; adenosylcobalamin biosynthesis. Part of the energy-coupling factor (ECF) transporter complex CbiMNOQ involved in cobalt import. In Acetoanaerobium sticklandii (strain ATCC 12662 / DSM 519 / JCM 1433 / CCUG 9281 / NCIMB 10654 / HF) (Clostridium sticklandii), this protein is Cobalt transport protein CbiM.